We begin with the raw amino-acid sequence, 2190 residues long: MNRAKPTTVRRPSAAAKPSGHPPPGDFIALGSKGQANESKTASTLLKPAPSGLPSERKRDAAAALSSASALTGLTKRPKLSSTPPLSALGRLAEAAVAEKRAISPSIKEPSVVPIEVLPTVLLDEIEAAELEGNDDRIEGVLCGAVKQLKVTRAKPDSTLYLSLMYLAKIKPNIFATEGVIEALCSLLRRDASINFKAKGNSLVSVLACNLLMAAYEEDENWPEIFVKVYIEDSLGERIWVDSPHCKTFVDNIQTAFNTRMPPRSVLLQGEAGRVAGDLGAGSSPHPSLTEEEDSQTELLIAEEKLSPEQEGQLMPRYEELAESVEEYVLDMLRDQLNRRQPIDNVSRNLLRLLTSTCGYKEVRLLAVQKLEMWLQNPKLTRPAQDLLMSVCMNCNTHGSEDMDVISHLIKIRLKPKVLLNHFMLCIRELLSAHKDNLGTTIKLVIFNELSSARNPNNMQVLYTALQHSSELAPKFLAMVFQDLLTNKDDYLRASRALLREIIKQTKHEINFQAFCLGLMQERKEPQYLEMEFKERFVVHITDVLAVSMMLGITAQVKEAGIAWDKGEKRNLEVLRSFQNQIAAIQRDAVWWLHTVVPSISKLAPKDYVHCLHKVLFTEQPETYYKWDNWPPESDRNFFLRLCSEVPILEDTLMRILVIGLSRELPLGPADAMELADHLVKRAAAVQADDVEVLKVGRTQLIDAVLNLCTYHHPENIQLPPGYQPPNLAISTLYWKAWPLLLVVAAFNPENIGLAAWEEYPTLKMLMEMVMTNNYSYPPCTLTDEETRTEMLNRELQTAQREKQEILAFEGHLAAASTKQTITESSSLLLSQLTSLDPQGPPRRPPPHILDQVKSLNQSLRLGHLLCRSRNPDFLLHIIQRQASSQSMPWLADLVQSSEGSLDVLPVQCLCEFLLHDAVDDAASGEEDDEGESKEQKAKKRQRQQKQRQLLGRLQDLLLGPKADEQTTCEVLDYFLRRLGSSQVASRVLAMKGLSLVLSEGSLRDGEEKEPPMEEDVGDTDVLQGYQWLLRDLPRLPLFDSVRSTTALALQQAIHMETDPQTISAYLIYLSQHTPVEEQAQHSDLALDVARLVVERSTIMSHLFSKLSPSAASDAVLSALLSIFSRYVRRMRQSKEGEEVYSWSESQDQVFLRWSSGETATMHILVVHAMVILLTLGPPRADDSEFQALLDIWFPEEKPLPTAFLVDTSEEALLLPDWLKLRMIRSEVLRLVDAALQDLEPQQLLLFVQSFGIPVSSMSKLLQFLDQAVAHDPQTLEQNIMDKNYMAHLVEVQHERGASGGQTFHSLLTASLPPRRDSTEAPKPKSSPEQPIGQGRIRVGTQLRVLGPEDDLAGMFLQIFPLSPDPRWQSSSPRPVALALQQALGQELARVVQGSPEVPGITVRVLQALATLLSSPHGGALVMSMHRSHFLACPLLRQLCQYQRCVPQDTGFSSLFLKVLLQMLQWLDSPGVEGGPLRAQLRMLASQASAGRRLSDVRGGLLRLAEALAFRQDLEVVSSTVRAVIATLRSGEQCSVEPDLISKVLQGLIEVRSPHLEELLTAFFSATADAASPFPACKPVVVVSSLLLQEEEPLAGGKPGADGGSLEAVRLGPSSGLLVDWLEMLDPEVVSSCPDLQLRLLFSRRKGKGQAQVPSFRPYLLTLFTHQSSWPTLHQCIRVLLGKSREQRFDPSASLDFLWACIHVPRIWQGRDQRTPQKRREELVLRVQGPELISLVELILAEAETRSQDGDTAACSLIQARLPLLLSCCCGDDESVRKVTEHLSGCIQQWGDSVLGRRCRDLLLQLYLQRPELRVPVPEVLLHSEGAASSSVCKLDGLIHRFITLLADTSDSRALENRGADASMACRKLAVAHPLLLLRHLPMIAALLHGRTHLNFQEFRQQNHLSCFLHVLGLLELLQPHVFRSEHQGALWDCLLSFIRLLLNYRKSSRHLAAFINKFVQFIHKYITYNAPAAISFLQKHADPLHDLSFDNSDLVMLKSLLAGLSLPSRDDRTDRGLDEEGEEESSAGSLPLVSVSLFTPLTAAEMAPYMKRLSRGQTVEDLLEVLSDIDEMSRRRPEILSFFSTNLQRLMSSAEECCRNLAFSLALRSMQNSPSIAAAFLPTFMYCLGSQDFEVVQTALRNLPEYALLCQEHAAVLLHRAFLVGMYGQMDPSAQISEALRILHMEAVM.

The disordered stretch occupies residues 1-61 (MNRAKPTTVR…GLPSERKRDA (61 aa)). A Phosphoserine modification is found at serine 13. Residues 34–44 (GQANESKTAST) are compositionally biased toward polar residues. The residue at position 47 (lysine 47) is an N6-acetyllysine. Residue threonine 83 is modified to Phosphothreonine. A phosphoserine mark is found at serine 87, serine 307, and serine 924. A disordered region spans residues 922-945 (AASGEEDDEGESKEQKAKKRQRQQ). Over residues 923 to 932 (ASGEEDDEGE) the composition is skewed to acidic residues. A helical transmembrane segment spans residues 1159–1179 (TATMHILVVHAMVILLTLGPP). Positions 1311 to 1334 (SLPPRRDSTEAPKPKSSPEQPIGQ) are disordered. Residues 1314–1323 (PRRDSTEAPK) show a composition bias toward basic and acidic residues. 4 positions are modified to phosphoserine: serine 1318, serine 1326, serine 1327, and serine 1395.

This sequence belongs to the Integrator subunit 1 family. Component of the Integrator complex, composed of core subunits INTS1, INTS2, INTS3, INTS4, INTS5, INTS6, INTS7, INTS8, INTS9/RC74, INTS10, INTS11/CPSF3L, INTS12, INTS13, INTS14 and INTS15. The core complex associates with protein phosphatase 2A subunits PPP2CA and PPP2R1A, to form the Integrator-PP2A (INTAC) complex. Interacts with ESRRB, ESRRB is not a core component of the Integrator complex and this association is a bridge for the interaction with the multiprotein complex Integrator; attracts the transcriptional machinery.

Its subcellular location is the nucleus. The protein resides in the nucleus membrane. Functionally, component of the integrator complex, a multiprotein complex that terminates RNA polymerase II (Pol II) transcription in the promoter-proximal region of genes. The integrator complex provides a quality checkpoint during transcription elongation by driving premature transcription termination of transcripts that are unfavorably configured for transcriptional elongation: the complex terminates transcription by (1) catalyzing dephosphorylation of the C-terminal domain (CTD) of Pol II subunit POLR2A/RPB1 and SUPT5H/SPT5, (2) degrading the exiting nascent RNA transcript via endonuclease activity and (3) promoting the release of Pol II from bound DNA. The integrator complex is also involved in terminating the synthesis of non-coding Pol II transcripts, such as enhancer RNAs (eRNAs), small nuclear RNAs (snRNAs), telomerase RNAs and long non-coding RNAs (lncRNAs). Within the integrator complex, INTS1 is involved in the post-termination step: INTS1 displaces INTS3 and the SOSS factors, allowing the integrator complex to return to the closed conformation, ready to bind to the paused elongation complex for another termination cycle. Mediates recruitment of cytoplasmic dynein to the nuclear envelope, probably as component of the integrator complex. The sequence is that of Integrator complex subunit 1 from Homo sapiens (Human).